The chain runs to 117 residues: Large ribosomal subunit protein uL22 (117 aa).

Belongs to the universal ribosomal protein uL22 family. As to quaternary structure, part of the 50S ribosomal subunit.

This protein binds specifically to 23S rRNA; its binding is stimulated by other ribosomal proteins, e.g. L4, L17, and L20. It is important during the early stages of 50S assembly. It makes multiple contacts with different domains of the 23S rRNA in the assembled 50S subunit and ribosome. Functionally, the globular domain of the protein is located near the polypeptide exit tunnel on the outside of the subunit, while an extended beta-hairpin is found that lines the wall of the exit tunnel in the center of the 70S ribosome. This Lacticaseibacillus casei (strain BL23) (Lactobacillus casei) protein is Large ribosomal subunit protein uL22.